A 365-amino-acid chain; its full sequence is Class I histocompatibility antigen, B alpha chain (365 aa).

The signal sequence occupies residues 1-24; it reads MTVMAPRTLLLLLSGALVLTETWA. The alpha-1 stretch occupies residues 25 to 114; the sequence is GSHSMRYFST…ALGYYNQSEA (90 aa). The Extracellular portion of the chain corresponds to 25–308; that stretch reads GSHSMRYFST…EPPSQPTIPI (284 aa). N-linked (GlcNAc...) asparagine glycosylation occurs at N110. The tract at residues 115 to 206 is alpha-2; sequence GSHTIQMMSG…ENGKETLQRA (92 aa). Disulfide bonds link C125-C188 and C227-C283. Residues 207-298 are alpha-3; sequence EPPKTHVTHH…GLPEPLTLRW (92 aa). Positions 209–297 constitute an Ig-like C1-type domain; it reads PKTHVTHHPV…EGLPEPLTLR (89 aa). The segment at 299–308 is connecting peptide; it reads EPPSQPTIPI. Residues 309-332 traverse the membrane as a helical segment; sequence MGIVAILAILGAVVTGAVVTAVMW. Residues 333–365 lie on the Cytoplasmic side of the membrane; it reads RKKSSDKKGGSYSQAARSDSAQGSDVSLTACKV. The segment at 337 to 361 is disordered; it reads SDKKGGSYSQAARSDSAQGSDVSLT. Positions 346 to 359 are enriched in polar residues; it reads QAARSDSAQGSDVS. A phosphoserine mark is found at S356 and S359.

It belongs to the MHC class I family. Heterodimer of an alpha chain and a beta chain (beta-2-microglobulin).

The protein resides in the membrane. Involved in the presentation of foreign antigens to the immune system. The chain is Class I histocompatibility antigen, B alpha chain from Saguinus oedipus (Cotton-top tamarin).